A 1500-amino-acid polypeptide reads, in one-letter code: Alpha-1-macroglobulin (1500 aa).

An N-terminal signal peptide occupies residues 1 to 24 (MRRNQLPIPVFLLLLLLLPRDATA). An intrachain disulfide couples Cys-48 to Cys-86. N-linked (GlcNAc...) asparagine glycans are attached at residues Asn-55, Asn-61, and Asn-157. 2 cysteine pairs are disulfide-bonded: Cys-249–Cys-298 and Cys-267–Cys-286. 2 N-linked (GlcNAc...) asparagine glycosylation sites follow: Asn-382 and Asn-412. A disulfide bond links Cys-469 and Cys-562. An N-linked (GlcNAc...) asparagine glycan is attached at Asn-568. 6 disulfides stabilise this stretch: Cys-594–Cys-785, Cys-642–Cys-689, Cys-835–Cys-863, Cys-861–Cys-897, Cys-935–Cys-1344, and Cys-1094–Cys-1142. The tract at residues 686–746 (PRYCPMYQAY…QEVEVRETVR (61 aa)) is bait region. 2 N-linked (GlcNAc...) asparagine glycosylation sites follow: Asn-883 and Asn-944. The segment at residues 986-989 (CGEQ) is a cross-link (isoglutamyl cysteine thioester (Cys-Gln)). Residue Asn-1005 is glycosylated (N-linked (GlcNAc...) asparagine). The interval 1360-1500 (EGEAPFTLKV…FSSDSEQGNA (141 aa)) is receptor-binding domain. N-linked (GlcNAc...) asparagine glycosylation is found at Asn-1390 and Asn-1448.

It belongs to the protease inhibitor I39 (alpha-2-macroglobulin) family. Homotetramer; disulfide-linked. In terms of tissue distribution, widely expressed. Highest level in ovary, testis, uterus and prostate. Protein found in plasma.

The protein resides in the secreted. In terms of biological role, is able to inhibit all four classes of proteinases by a unique 'trapping' mechanism. This protein has a peptide stretch, called the 'bait region' which contains specific cleavage sites for different proteinases. When a proteinase cleaves the bait region, a conformational change is induced in the protein which traps the proteinase. The entrapped enzyme remains active against low molecular weight substrates (activity against high molecular weight substrates is greatly reduced). Following cleavage in the bait region a thioester bond is hydrolyzed and mediates the covalent binding of the protein to the proteinase. The polypeptide is Alpha-1-macroglobulin (Rattus norvegicus (Rat)).